The sequence spans 400 residues: Large envelope protein (400 aa).

N-acetylmethionine is present on methionine 1. 3 disordered regions span residues 1–64, 85–118, and 143–174; these read MGGW…GAFG, LTTV…SHPQ, and PGGS…PAPN. The N-myristoyl glycine; by host moiety is linked to residue glycine 2. Residues 2 to 119 are pre-S1; sequence GGWSSKPRQG…PPLRDSHPQA (118 aa). Positions 2–174 are pre-S; sequence GGWSSKPRQG…SSRTGDPAPN (173 aa). Over 2–181 the chain is Virion surface; in external conformation; the sequence is GGWSSKPRQG…APNMESTTSG (180 aa). The Intravirion; in internal conformation segment spans residues 2 to 253; it reads GGWSSKPRQG…PGYRWMCLRR (252 aa). A glycan (N-linked (GlcNAc...) asparagine) is linked at tryptophan 4. Residues 96 to 106 are compositionally biased toward polar residues; the sequence is STNRQSGRQPT. Positions 120-174 are pre-S2; sequence MQWNSTTFHQVLLDPRVRGLYFPPGGSSSGTVNPVPTTASPISSISSRTGDPAPN. Residues 155–166 are compositionally biased toward low complexity; the sequence is PTTASPISSISS. Residues 182 to 202 form a helical membrane-spanning segment; the sequence is FLGPLLVLQAGFFLLTRILTI. Residues 203 to 253 are Intravirion; in external conformation-facing; that stretch reads PQSLDSWWTSLNFLGGAPTCPGQNSQSPTSNHSPTSCPPICPGYRWMCLRR. A helical transmembrane segment spans residues 254–274; sequence FIIFLFILLLCLIFLLVLLDY. Topologically, residues 275-348 are virion surface; the sequence is QGMLPVCPLL…GASVRFSWLS (74 aa). N-linked (GlcNAc...) asparagine; by host glycosylation occurs at asparagine 320. Residues 349–369 traverse the membrane as a helical segment; it reads LLVPFVQWFVGLSPTVWLSVI. The Intravirion portion of the chain corresponds to 370-375; that stretch reads WMMWYW. Residues 376-398 form a helical membrane-spanning segment; sequence GPSLYNILSPFLPLLPIFFCLWV. The Virion surface segment spans residues 399-400; it reads YI.

The protein belongs to the orthohepadnavirus major surface antigen family. In its internal form (Li-HBsAg), interacts with the capsid protein and with the isoform S. Interacts with host chaperone CANX. In terms of assembly, associates with host chaperone CANX through its pre-S2 N glycan; this association may be essential for isoform M proper secretion. As to quaternary structure, interacts with isoform L. Interacts with the antigens of satellite virus HDV (HDVAgs); this interaction is required for encapsidation of HDV genomic RNA. In terms of processing, isoform M is N-terminally acetylated by host at a ratio of 90%, and N-glycosylated by host at the pre-S2 region. Myristoylated.

It is found in the virion membrane. Its function is as follows. The large envelope protein exists in two topological conformations, one which is termed 'external' or Le-HBsAg and the other 'internal' or Li-HBsAg. In its external conformation the protein attaches the virus to cell receptors and thereby initiating infection. This interaction determines the species specificity and liver tropism. This attachment induces virion internalization predominantly through caveolin-mediated endocytosis. The large envelope protein also assures fusion between virion membrane and endosomal membrane. In its internal conformation the protein plays a role in virion morphogenesis and mediates the contact with the nucleocapsid like a matrix protein. In terms of biological role, the middle envelope protein plays an important role in the budding of the virion. It is involved in the induction of budding in a nucleocapsid independent way. In this process the majority of envelope proteins bud to form subviral lipoprotein particles of 22 nm of diameter that do not contain a nucleocapsid. The chain is Large envelope protein from Homo sapiens (Human).